A 281-amino-acid chain; its full sequence is Probable thioesterase gloN (281 aa).

Residues 207 to 233 (LDDGSNNSRDLNETSPTETSNDSETQA) form a disordered region. Positions 210 to 232 (GSNNSRDLNETSPTETSNDSETQ) are enriched in polar residues.

The protein belongs to the AMT4 thioesterase family.

It functions in the pathway mycotoxin biosynthesis. Its function is as follows. Probable thioesterase; part of the gene cluster that mediates the biosynthesis of pneumocandins, lipohexapeptides of the echinocandin family that prevent fungal cell wall formation by non-competitive inhibition of beta-1,3-glucan synthase. The 10,12-dimethylmyristoyl side chain is synthesized by the reducing polyketide synthase gloL/GLPKS4. The thioesterase gloN/GLHYD exclusively interacts with gloL/GLPKS4 to maintain turnover of the polyketide side chain. The 10R,12S-dimethylmyristic acid is then transferred to the first thiolation domain of the nonribosomal peptide synthetase gloA/GLNRPS4 by the acyl-AMP ligase gloD/GLligase, followed by its acylation to L-ornithine to trigger elongation of the cyclic hexapeptide. L-ornithine, 4R-hydroxyl-L-proline (generated from L-proline by the dioxygenase gloF/GLOXY2), 3S-hydroxyl-L-homotyrosine (generated by gloG/GLHtyB, gloH/GLHtyA, gloI/GLHtyC, gloJ/GLHtyD and hydroxylated at C-3 by the dioxygenase gloM/GLOXY1), 3R-hydroxyl-L-glutamine (generated from L-glutamine probably by the dioxygenase gloE/GLOXY3) and 3S-hydroxyl-L-proline (generated from L-proline by the dioxygenase gloF/GLOXY2 to yield pneumocandin B0), or 3S-hydroxyl-4S-methyl-L-proline (generated from L-leucine by the dioxygenase gloC/GLOXY4 to yield pneumocandin A0) are sequentially added to the growing chain. The last C domain of gloA/GLNRPS4 is proposed to be responsible for cyclization by condensation to form the peptide bond between L-ornithine and 3S-hydroxyl-4S-methyl-L-proline (for pneumocandin A0) or 3S-hydroxyl-L-proline (for pneumocandin B0). Finally, the subsequent C-4 hydroxylation of 3S-hydroxyl-L-homotyrosine and L-ornithine dihydroxylation at C-4 and C-5 are performed by the cytochrome P450 monooxygenases gloP/GLP450-1 and gloO/GLP450-2, respectively. This is Probable thioesterase gloN from Glarea lozoyensis (strain ATCC 20868 / MF5171).